The primary structure comprises 396 residues: Tail sheath protein (396 aa).

It belongs to the myoviridae tail sheath protein family. Homomultimer.

It localises to the virion. It is found in the host cytoplasm. In terms of biological role, polymerizes as an extended helical structure around the baseplate-tail tube complex. During ejection, the sheath shifts to a contracted form, thereby making the inner tail tube protrude through the host cell envelope. This is Tail sheath protein (FI) from Enterobacteriaceae (Bacteriophage P2).